Reading from the N-terminus, the 386-residue chain is Ribosomal RNA small subunit methyltransferase H (386 aa).

S-adenosyl-L-methionine contacts are provided by residues 97 to 99, D116, Y143, D167, and Q174; that span reads GGH.

The protein belongs to the methyltransferase superfamily. RsmH family.

The protein resides in the cytoplasm. The catalysed reaction is cytidine(1402) in 16S rRNA + S-adenosyl-L-methionine = N(4)-methylcytidine(1402) in 16S rRNA + S-adenosyl-L-homocysteine + H(+). Specifically methylates the N4 position of cytidine in position 1402 (C1402) of 16S rRNA. The sequence is that of Ribosomal RNA small subunit methyltransferase H from Mycobacterium avium (strain 104).